We begin with the raw amino-acid sequence, 88 residues long: LYR motif-containing protein 2 (88 aa).

The transit peptide at 1-19 directs the protein to the mitochondrion; the sequence is MAASRLPPATLTLKQFMRR.

The protein belongs to the complex I LYR family.

It localises to the mitochondrion. Its function is as follows. Involved in efficient integration of the N-module into mitochondrial respiratory chain complex I. This Rattus norvegicus (Rat) protein is LYR motif-containing protein 2 (Lyrm2).